The sequence spans 274 residues: Thiamine kinase (274 aa).

Belongs to the thiamine kinase family.

The catalysed reaction is thiamine + ATP = thiamine phosphate + ADP + H(+). It functions in the pathway cofactor biosynthesis; thiamine diphosphate biosynthesis; thiamine phosphate from thiamine: step 1/1. Catalyzes the ATP-dependent phosphorylation of thiamine to thiamine phosphate. Is involved in thiamine salvage. The protein is Thiamine kinase of Salmonella choleraesuis (strain SC-B67).